A 371-amino-acid chain; its full sequence is MVDWSTLPEELLHFIAARSFSLVEYKRFSSICVSWHSSVSGVKKNPFHRRPLIDFNPIAPSETLLEDHVFSCNPGAFLSRAAFFRVTLSSSPSKGWIIKSDMDTNSGRFHLLNPLSRFPLRISSESLDLLDFTVSEIQESYAVLKDAKGRLPNPGYQRSALVKVKEGDDHHHGILGIGRDGTINYWNGNVLNGFKQMGHHFSDIIVHKGVTYVLDSKGIVWCINSDLEMSRYETSLDENMTNGCRRYYMRFVDCCGELYVIKRLPKENSRKRKSTLFQFSRTAGFKVYKIDKELAKWVEVKTLGDNAFVMATDTCFSVLAHEYYGCLPNSIYFIEDLEPKVFQLDNGNGSSITRKSESSESSFEMFFPSFL.

The F-box domain maps to 2–49; sequence VDWSTLPEELLHFIAARSFSLVEYKRFSSICVSWHSSVSGVKKNPFHR.

This chain is Probable F-box protein At1g65740, found in Arabidopsis thaliana (Mouse-ear cress).